The sequence spans 564 residues: Dihydroxy-acid dehydratase (564 aa).

Aspartate 80 contributes to the Mg(2+) binding site. Position 121 (cysteine 121) interacts with [2Fe-2S] cluster. Aspartate 122 and lysine 123 together coordinate Mg(2+). Residue lysine 123 is modified to N6-carboxylysine. Cysteine 194 provides a ligand contact to [2Fe-2S] cluster. Glutamate 447 serves as a coordination point for Mg(2+). The Proton acceptor role is filled by serine 473.

The protein belongs to the IlvD/Edd family. In terms of assembly, homodimer. [2Fe-2S] cluster serves as cofactor. Requires Mg(2+) as cofactor.

It carries out the reaction (2R)-2,3-dihydroxy-3-methylbutanoate = 3-methyl-2-oxobutanoate + H2O. It catalyses the reaction (2R,3R)-2,3-dihydroxy-3-methylpentanoate = (S)-3-methyl-2-oxopentanoate + H2O. The protein operates within amino-acid biosynthesis; L-isoleucine biosynthesis; L-isoleucine from 2-oxobutanoate: step 3/4. Its pathway is amino-acid biosynthesis; L-valine biosynthesis; L-valine from pyruvate: step 3/4. Its function is as follows. Functions in the biosynthesis of branched-chain amino acids. Catalyzes the dehydration of (2R,3R)-2,3-dihydroxy-3-methylpentanoate (2,3-dihydroxy-3-methylvalerate) into 2-oxo-3-methylpentanoate (2-oxo-3-methylvalerate) and of (2R)-2,3-dihydroxy-3-methylbutanoate (2,3-dihydroxyisovalerate) into 2-oxo-3-methylbutanoate (2-oxoisovalerate), the penultimate precursor to L-isoleucine and L-valine, respectively. This Listeria innocua serovar 6a (strain ATCC BAA-680 / CLIP 11262) protein is Dihydroxy-acid dehydratase.